We begin with the raw amino-acid sequence, 261 residues long: Pantothenate synthetase (261 aa).

29–36 (MGALHNGH) is an ATP binding site. The active-site Proton donor is the His36. Gln60 lines the (R)-pantoate pocket. Position 60 (Gln60) interacts with beta-alanine. Residue 147-150 (GEKD) coordinates ATP. Gln153 provides a ligand contact to (R)-pantoate. 184 to 187 (LSSR) provides a ligand contact to ATP.

It belongs to the pantothenate synthetase family. Homodimer.

The protein resides in the cytoplasm. It catalyses the reaction (R)-pantoate + beta-alanine + ATP = (R)-pantothenate + AMP + diphosphate + H(+). It functions in the pathway cofactor biosynthesis; (R)-pantothenate biosynthesis; (R)-pantothenate from (R)-pantoate and beta-alanine: step 1/1. Catalyzes the condensation of pantoate with beta-alanine in an ATP-dependent reaction via a pantoyl-adenylate intermediate. This Francisella philomiragia subsp. philomiragia (strain ATCC 25017 / CCUG 19701 / FSC 153 / O#319-036) protein is Pantothenate synthetase.